A 443-amino-acid chain; its full sequence is Ribosomal protein uS12 methylthiotransferase RimO (443 aa).

The MTTase N-terminal domain maps to 5–116 (PTIAINHLGC…IVDIIRRTEQ (112 aa)). Residues C14, C50, C79, C154, C158, and C161 each coordinate [4Fe-4S] cluster. The region spanning 140-369 (TTNEAIAYLR…MALQQPISAQ (230 aa)) is the Radical SAM core domain. One can recognise a TRAM domain in the interval 372–438 (AACLGQTLDV…DYDLYGMTAE (67 aa)).

It belongs to the methylthiotransferase family. RimO subfamily. Requires [4Fe-4S] cluster as cofactor.

The protein resides in the cytoplasm. It carries out the reaction L-aspartate(89)-[ribosomal protein uS12]-hydrogen + (sulfur carrier)-SH + AH2 + 2 S-adenosyl-L-methionine = 3-methylsulfanyl-L-aspartate(89)-[ribosomal protein uS12]-hydrogen + (sulfur carrier)-H + 5'-deoxyadenosine + L-methionine + A + S-adenosyl-L-homocysteine + 2 H(+). Its function is as follows. Catalyzes the methylthiolation of an aspartic acid residue of ribosomal protein uS12. This chain is Ribosomal protein uS12 methylthiotransferase RimO, found in Synechocystis sp. (strain ATCC 27184 / PCC 6803 / Kazusa).